The sequence spans 403 residues: Glutamyl-tRNA reductase 2 (403 aa).

Substrate-binding positions include 47-50 (TCHR), Ser-98, 103-105 (ETD), and Gln-109. Cys-48 serves as the catalytic Nucleophile. 177-182 (GAGAVG) lines the NADP(+) pocket.

Belongs to the glutamyl-tRNA reductase family. As to quaternary structure, homodimer.

The catalysed reaction is (S)-4-amino-5-oxopentanoate + tRNA(Glu) + NADP(+) = L-glutamyl-tRNA(Glu) + NADPH + H(+). The protein operates within porphyrin-containing compound metabolism; protoporphyrin-IX biosynthesis; 5-aminolevulinate from L-glutamyl-tRNA(Glu): step 1/2. Functionally, catalyzes the NADPH-dependent reduction of glutamyl-tRNA(Glu) to glutamate 1-semialdehyde (GSA). This is Glutamyl-tRNA reductase 2 from Pyrobaculum arsenaticum (strain DSM 13514 / JCM 11321 / PZ6).